We begin with the raw amino-acid sequence, 38 residues long: TESPIPVPAPAPAAKPKPKRVSKRPASHPPYSDMIAAA.

Over residues 1 to 15 the composition is skewed to pro residues; sequence TESPIPVPAPAPAAK. The interval 1–38 is disordered; that stretch reads TESPIPVPAPAPAAKPKPKRVSKRPASHPPYSDMIAAA. A compositionally biased stretch (basic residues) spans 16–26; the sequence is PKPKRVSKRPA.

It belongs to the histone H1/H5 family. In terms of tissue distribution, erythroid cells.

The protein localises to the nucleus. It localises to the chromosome. Functionally, histone H5 performs the same function as H1, being necessary for the condensation of nucleosome chains into higher order structures, and replaces histone H1 in certain cells. In Columba livia (Rock dove), this protein is Histone H5.